A 1057-amino-acid polypeptide reads, in one-letter code: MPKRNDIKTILVIGSGPIIIGQAAEFDYAGTQACLALKEEGYRVILVNSNPATIMTDKEIADKVYIEPLTHDFIARIIRKEQPDALLPTLGGQTGLNMAIQLHESGVLQDNNVQLLGTELTSIQQAEDREMFRTLMNDLNVPVPESDIVNTVEQAFKFKEQVGYPLIVRPAFTMGGTGGGICHNDEELHEIVSNGLHYSPATQCLLEKSIAGFKEIEYEVMRDKNDNAIVVCNMENIDPVGIHTGDSIVVAPSQTLSDVEYQMLRDVSLKVIRALGIEGGCNVQLALDPHSFDYYIIEVNPRVSRSSALASKATGYPIAKLAAKIAVGLTLDEMLNPITGTSYAAFEPTLDYVISKIPRFPFDKFEKGERELGTQMKATGEVMAIGRTYEESLLKAIRSLEYGVHHLGLPNGESFDLDYIKERISHQDDERLFFIGEAIRRGTTLEEIHNMTQIDYFFLHKFQNIIDIEHQLKEHQGDLEYLKYAKDYGFSDKTIAHRFNMTEEEVYQLRMENDIKPVYKMVDTCAAEFESSTPYYYGTYETENESIVTDKEKILVLGSGPIRIGQGVEFDYATVHAVWAIQKAGYEAIIVNNNPETVSTDFSISDKLYFEPLTEEDVMNIINLEKPKGVVVQFGGQTAINLADKLAKHGVKILGTSLENLNRAEDRKEFEALLRKINVPQPQGKTATSPEEALANAAEIGYPVVVRPSYVLGGRAMEIVDNDKELENYMTQAVKASPEHPVLVDRYLTGKEIEVDAICDGETVIIPGIMEHIERAGVHSGDSIAVYPPQTLTEDELATLEDYTIKLAKGLNIIGLINIQFVIAHDGVYVLEVNPRSSRTVPFLSKITDIPMAQLAMRAIIGEKLTDMGYQEGVQPYAEGVFVKAPVFSFNKLKNVDITLGPEMKSTGEVMGKDTTLEKALFKGLTGSGVEVKDHGTVLMTVSDKDKEEVVKLAQRLNEVGYKILATSGTANKLAEYDIPAEVVGKIGGENDLLTRIQNGDVQIVINTMTKGKEVERDGFQIRRTTVENGIPCLTSLDTANALTNVIESMTFTMRQM.

Positions 1–401 (MPKRNDIKTI…SLLKAIRSLE (401 aa)) are carboxyphosphate synthetic domain. The ATP site is built by R129, R169, G175, G176, K208, I210, E215, G241, I242, H243, Q284, and E298. An ATP-grasp 1 domain is found at 133–327 (RTLMNDLNVP…IAKLAAKIAV (195 aa)). Residues Q284, E298, and N300 each contribute to the Mg(2+) site. Mn(2+) is bound by residues Q284, E298, and N300. An oligomerization domain region spans residues 402–546 (YGVHHLGLPN…YGTYETENES (145 aa)). The segment at 547 to 929 (IVTDKEKILV…ALFKGLTGSG (383 aa)) is carbamoyl phosphate synthetic domain. In terms of domain architecture, ATP-grasp 2 spans 671-861 (EALLRKINVP…MAQLAMRAII (191 aa)). R707, R746, L748, E752, G777, V778, H779, S780, Q820, and E832 together coordinate ATP. The Mg(2+) site is built by Q820, E832, and N834. Mn(2+) contacts are provided by Q820, E832, and N834. The region spanning 930 to 1057 (VEVKDHGTVL…ESMTFTMRQM (128 aa)) is the MGS-like domain. Residues 930 to 1057 (VEVKDHGTVL…ESMTFTMRQM (128 aa)) form an allosteric domain region.

The protein belongs to the CarB family. In terms of assembly, composed of two chains; the small (or glutamine) chain promotes the hydrolysis of glutamine to ammonia, which is used by the large (or ammonia) chain to synthesize carbamoyl phosphate. Tetramer of heterodimers (alpha,beta)4. It depends on Mg(2+) as a cofactor. The cofactor is Mn(2+).

It carries out the reaction hydrogencarbonate + L-glutamine + 2 ATP + H2O = carbamoyl phosphate + L-glutamate + 2 ADP + phosphate + 2 H(+). It catalyses the reaction hydrogencarbonate + NH4(+) + 2 ATP = carbamoyl phosphate + 2 ADP + phosphate + 2 H(+). It participates in amino-acid biosynthesis; L-arginine biosynthesis; carbamoyl phosphate from bicarbonate: step 1/1. Its pathway is pyrimidine metabolism; UMP biosynthesis via de novo pathway; (S)-dihydroorotate from bicarbonate: step 1/3. In terms of biological role, large subunit of the glutamine-dependent carbamoyl phosphate synthetase (CPSase). CPSase catalyzes the formation of carbamoyl phosphate from the ammonia moiety of glutamine, carbonate, and phosphate donated by ATP, constituting the first step of 2 biosynthetic pathways, one leading to arginine and/or urea and the other to pyrimidine nucleotides. The large subunit (synthetase) binds the substrates ammonia (free or transferred from glutamine from the small subunit), hydrogencarbonate and ATP and carries out an ATP-coupled ligase reaction, activating hydrogencarbonate by forming carboxy phosphate which reacts with ammonia to form carbamoyl phosphate. This is Carbamoyl phosphate synthase large chain from Staphylococcus aureus (strain USA300 / TCH1516).